Consider the following 381-residue polypeptide: tRNA-specific 2-thiouridylase MnmA (381 aa).

ATP contacts are provided by residues 9–16 (GMSGGVDS) and M35. Residues 95–97 (NPD) are interaction with target base in tRNA. C100 serves as the catalytic Nucleophile. Residues C100 and C196 are joined by a disulfide bond. G124 lines the ATP pocket. The interval 146–148 (KDQ) is interaction with tRNA. The active-site Cysteine persulfide intermediate is C196. Positions 308-309 (RY) are interaction with tRNA.

It belongs to the MnmA/TRMU family.

Its subcellular location is the cytoplasm. The enzyme catalyses S-sulfanyl-L-cysteinyl-[protein] + uridine(34) in tRNA + AH2 + ATP = 2-thiouridine(34) in tRNA + L-cysteinyl-[protein] + A + AMP + diphosphate + H(+). Catalyzes the 2-thiolation of uridine at the wobble position (U34) of tRNA, leading to the formation of s(2)U34. The sequence is that of tRNA-specific 2-thiouridylase MnmA from Burkholderia multivorans (strain ATCC 17616 / 249).